A 692-amino-acid polypeptide reads, in one-letter code: Alpha-amylase SusG (692 aa).

The N-terminal stretch at 1 to 22 (MNKHLHFLSLLWLSMLMAFMTA) is a signal peptide. Residue C23 is the site of N-palmitoyl cysteine attachment. A lipid anchor (S-diacylglycerol cysteine) is attached at C23. D73, D75, D77, Y79, and D81 together coordinate Mg(2+). N153 provides a ligand contact to Ca(2+). Starch binding regions lie at residues H154, 260-263 (YYGE), and 330-333 (NIMF). D352 contacts Ca(2+). Residues 386–392 (RLDAVKH) form a starch binding region. D388 acts as the Nucleophile in catalysis. H392 provides a ligand contact to Ca(2+). Catalysis depends on E431, which acts as the Proton donor. Residues D437 and R457 are each a region of interest (starch binding).

This sequence belongs to the glycosyl hydrolase 13 family. Monomer. The cofactor is Ca(2+).

It localises to the cell outer membrane. The catalysed reaction is Endohydrolysis of (1-&gt;4)-alpha-D-glucosidic linkages in polysaccharides containing three or more (1-&gt;4)-alpha-linked D-glucose units.. The protein operates within glycan degradation; starch degradation. Alpha-amylase that cleaves starch into oligosaccharides before internalization for degradation, the first step in starch degradation. In Bacteroides thetaiotaomicron (strain ATCC 29148 / DSM 2079 / JCM 5827 / CCUG 10774 / NCTC 10582 / VPI-5482 / E50), this protein is Alpha-amylase SusG (susG).